A 277-amino-acid polypeptide reads, in one-letter code: Formamidopyrimidine-DNA glycosylase (277 aa).

The active-site Schiff-base intermediate with DNA is the proline 2. Glutamate 3 (proton donor) is an active-site residue. The active-site Proton donor; for beta-elimination activity is the lysine 60. Residues histidine 94, arginine 113, and arginine 156 each coordinate DNA. An FPG-type zinc finger spans residues lysine 241–lysine 275. Residue arginine 265 is the Proton donor; for delta-elimination activity of the active site.

Belongs to the FPG family. As to quaternary structure, monomer. Zn(2+) is required as a cofactor.

It carries out the reaction Hydrolysis of DNA containing ring-opened 7-methylguanine residues, releasing 2,6-diamino-4-hydroxy-5-(N-methyl)formamidopyrimidine.. It catalyses the reaction 2'-deoxyribonucleotide-(2'-deoxyribose 5'-phosphate)-2'-deoxyribonucleotide-DNA = a 3'-end 2'-deoxyribonucleotide-(2,3-dehydro-2,3-deoxyribose 5'-phosphate)-DNA + a 5'-end 5'-phospho-2'-deoxyribonucleoside-DNA + H(+). In terms of biological role, involved in base excision repair of DNA damaged by oxidation or by mutagenic agents. Acts as a DNA glycosylase that recognizes and removes damaged bases. Has a preference for oxidized purines, such as 7,8-dihydro-8-oxoguanine (8-oxoG). Has AP (apurinic/apyrimidinic) lyase activity and introduces nicks in the DNA strand. Cleaves the DNA backbone by beta-delta elimination to generate a single-strand break at the site of the removed base with both 3'- and 5'-phosphates. The chain is Formamidopyrimidine-DNA glycosylase from Desulforamulus reducens (strain ATCC BAA-1160 / DSM 100696 / MI-1) (Desulfotomaculum reducens).